A 439-amino-acid polypeptide reads, in one-letter code: Probable anion transporter 7 (439 aa).

Positions 1–28 are cleaved as a signal peptide; the sequence is MTALTRMKFPKRYVIVLLTFICTNVCYI. The next 11 helical transmembrane spans lie at 53–73, 81–101, 104–124, 143–163, 167–187, 232–252, 280–300, 312–332, 338–358, 367–387, and 412–432; these read MILSMFYYGYVLSQIPGGWAA, VLLLSFVLWSLICGLIPLDPK, VILVLSRLFVGVAQGFIFPAI, LTTSGMYLGAAGGMLFFPSLV, GAQSVFFVEAVLGVAWSVIWL, IIFSLPVWAIVVNNFTFHYAL, LPYFNMFIFSNIGGVVADHLI, KLLNTIGFVVSAVALMALPLF, TVLCSSISLGFLALGRAGFAV, FAGIVMGVSNTAGTLAGIVGV, and TVFFVPGYLCIFSSIIFLIFS.

Belongs to the major facilitator superfamily. Sodium/anion cotransporter (TC 2.A.1.14) family.

The protein localises to the cell membrane. Its function is as follows. Probable anion transporter. The chain is Probable anion transporter 7 (PHT4;7) from Oryza sativa subsp. japonica (Rice).